Reading from the N-terminus, the 361-residue chain is S-adenosylmethionine decarboxylase proenzyme (361 aa).

Active-site residues include Glu8 and Glu11. The active-site Schiff-base intermediate with substrate; via pyruvic acid is Ser68. Position 68 is a pyruvic acid (Ser); by autocatalysis (Ser68). Cys82 functions as the Proton donor; for catalytic activity in the catalytic mechanism. Catalysis depends on proton acceptor; for processing activity residues Ser234 and His247. A disordered region spans residues 341–361 (SCGSPRSTLHRCWSETENEEE).

This sequence belongs to the eukaryotic AdoMetDC family. Pyruvate serves as cofactor. Is synthesized initially as an inactive proenzyme. Formation of the active enzyme involves a self-maturation process in which the active site pyruvoyl group is generated from an internal serine residue via an autocatalytic post-translational modification. Two non-identical subunits are generated from the proenzyme in this reaction, and the pyruvate is formed at the N-terminus of the alpha chain, which is derived from the carboxyl end of the proenzyme. The post-translation cleavage follows an unusual pathway, termed non-hydrolytic serinolysis, in which the side chain hydroxyl group of the serine supplies its oxygen atom to form the C-terminus of the beta chain, while the remainder of the serine residue undergoes an oxidative deamination to produce ammonia and the pyruvoyl group blocking the N-terminus of the alpha chain.

It catalyses the reaction S-adenosyl-L-methionine + H(+) = S-adenosyl 3-(methylsulfanyl)propylamine + CO2. The protein operates within amine and polyamine biosynthesis; S-adenosylmethioninamine biosynthesis; S-adenosylmethioninamine from S-adenosyl-L-methionine: step 1/1. The polypeptide is S-adenosylmethionine decarboxylase proenzyme (SAMDC) (Helianthus annuus (Common sunflower)).